The sequence spans 411 residues: MNALAATSRNFKQAAKLLGLDSKLEKSLLIPFREIKVECTIPKDDGTLASYVGFRVQHDNARGPMKGGIRYHHEVDPDEVNALAQLMTWKTAVANIPYGGAKGGIGCSPGDLSISELERLTRVFTQKIHDLIGIHTDVPAPDMGTNSQTMAWILDEYSKFHGYSPAVVTGKPVDLGGSLGRDAATGRGVLFATEALLAEHGKGIAGQRFVIQGFGNVGSWAAQLISEAGGKVIAISDVTGAVKNVDGLDIAQLVKHSAENKGIKGFKGGDAIAPDSLLTEECDVLIPAALGGVINKDNANDIKAKYIIEAANHPTDPEADEILSKKGVLILPDILANSGGVTVSYFEWVQNIQGFMWDEEKVNAELRTYITRAFGNVKQMCRSHSCDLRMGAFTLGVNRVARATVLRGWEA.

The active site involves K102.

The protein belongs to the Glu/Leu/Phe/Val dehydrogenases family.

It catalyses the reaction L-glutamate + NAD(+) + H2O = 2-oxoglutarate + NH4(+) + NADH + H(+). The catalysed reaction is L-glutamate + NADP(+) + H2O = 2-oxoglutarate + NH4(+) + NADPH + H(+). This chain is Glutamate dehydrogenase (GDH1), found in Zea mays (Maize).